The following is a 491-amino-acid chain: Aspartyl/glutamyl-tRNA(Asn/Gln) amidotransferase subunit B (491 aa).

This sequence belongs to the GatB/GatE family. GatB subfamily. Heterotrimer of A, B and C subunits.

It catalyses the reaction L-glutamyl-tRNA(Gln) + L-glutamine + ATP + H2O = L-glutaminyl-tRNA(Gln) + L-glutamate + ADP + phosphate + H(+). It carries out the reaction L-aspartyl-tRNA(Asn) + L-glutamine + ATP + H2O = L-asparaginyl-tRNA(Asn) + L-glutamate + ADP + phosphate + 2 H(+). In terms of biological role, allows the formation of correctly charged Asn-tRNA(Asn) or Gln-tRNA(Gln) through the transamidation of misacylated Asp-tRNA(Asn) or Glu-tRNA(Gln) in organisms which lack either or both of asparaginyl-tRNA or glutaminyl-tRNA synthetases. The reaction takes place in the presence of glutamine and ATP through an activated phospho-Asp-tRNA(Asn) or phospho-Glu-tRNA(Gln). This chain is Aspartyl/glutamyl-tRNA(Asn/Gln) amidotransferase subunit B, found in Nostoc sp. (strain PCC 7120 / SAG 25.82 / UTEX 2576).